We begin with the raw amino-acid sequence, 735 residues long: Phosphoribosylformylglycinamidine synthase subunit PurL (735 aa).

The active site involves His-49. Tyr-52 and Lys-91 together coordinate ATP. Glu-93 contacts Mg(2+). Substrate-binding positions include 94-97 (SHNH) and Arg-116. His-95 acts as the Proton acceptor in catalysis. Position 117 (Asp-117) interacts with Mg(2+). Substrate is bound at residue Gln-240. Asp-268 is a Mg(2+) binding site. 312-314 (ESQ) contributes to the substrate binding site. Residues Asp-493 and Gly-530 each contribute to the ATP site. Residue Asn-531 coordinates Mg(2+). Ser-533 is a substrate binding site.

Belongs to the FGAMS family. As to quaternary structure, monomer. Part of the FGAM synthase complex composed of 1 PurL, 1 PurQ and 2 PurS subunits.

It localises to the cytoplasm. The catalysed reaction is N(2)-formyl-N(1)-(5-phospho-beta-D-ribosyl)glycinamide + L-glutamine + ATP + H2O = 2-formamido-N(1)-(5-O-phospho-beta-D-ribosyl)acetamidine + L-glutamate + ADP + phosphate + H(+). It participates in purine metabolism; IMP biosynthesis via de novo pathway; 5-amino-1-(5-phospho-D-ribosyl)imidazole from N(2)-formyl-N(1)-(5-phospho-D-ribosyl)glycinamide: step 1/2. In terms of biological role, part of the phosphoribosylformylglycinamidine synthase complex involved in the purines biosynthetic pathway. Catalyzes the ATP-dependent conversion of formylglycinamide ribonucleotide (FGAR) and glutamine to yield formylglycinamidine ribonucleotide (FGAM) and glutamate. The FGAM synthase complex is composed of three subunits. PurQ produces an ammonia molecule by converting glutamine to glutamate. PurL transfers the ammonia molecule to FGAR to form FGAM in an ATP-dependent manner. PurS interacts with PurQ and PurL and is thought to assist in the transfer of the ammonia molecule from PurQ to PurL. This Azorhizobium caulinodans (strain ATCC 43989 / DSM 5975 / JCM 20966 / LMG 6465 / NBRC 14845 / NCIMB 13405 / ORS 571) protein is Phosphoribosylformylglycinamidine synthase subunit PurL.